A 188-amino-acid chain; its full sequence is UPF0301 protein Smal_0940 (188 aa).

The protein belongs to the UPF0301 (AlgH) family.

The protein is UPF0301 protein Smal_0940 of Stenotrophomonas maltophilia (strain R551-3).